The chain runs to 98 residues: Small ribosomal subunit protein bS20 (98 aa).

A disordered region spans residues 76 to 98 (HPNNGARKKSRLASKLKPIEQTA).

This sequence belongs to the bacterial ribosomal protein bS20 family.

Its function is as follows. Binds directly to 16S ribosomal RNA. The chain is Small ribosomal subunit protein bS20 from Trichormus variabilis (strain ATCC 29413 / PCC 7937) (Anabaena variabilis).